The following is a 147-amino-acid chain: Basic phospholipase A2 beta-bungarotoxin A1 chain (147 aa).

An N-terminal signal peptide occupies residues 1–19 (MNPAHLLVLSAVCVSLLGA). The propeptide occupies 20 to 27 (ANIPPHPL). 6 disulfides stabilise this stretch: Cys54–Cys146, Cys56–Cys72, Cys71–Cys127, Cys78–Cys120, Cys88–Cys113, and Cys106–Cys118. Tyr55, Gly57, and Gly59 together coordinate Ca(2+). His75 is a catalytic residue. Residue Asp76 participates in Ca(2+) binding. Residue Asp121 is part of the active site.

This sequence belongs to the phospholipase A2 family. Group I subfamily. D49 sub-subfamily. Heterodimer; disulfide-linked. The A chains have phospholipase A2 activity and the B chains show homology with the basic protease inhibitors. The A1 chain is found in beta-1 and beta-2 bungarotoxins. Ca(2+) serves as cofactor. As to expression, expressed by the venom gland.

It localises to the secreted. It carries out the reaction a 1,2-diacyl-sn-glycero-3-phosphocholine + H2O = a 1-acyl-sn-glycero-3-phosphocholine + a fatty acid + H(+). Snake venom phospholipase A2 (PLA2) that inhibits neuromuscular transmission by blocking acetylcholine release from the nerve termini. PLA2 catalyzes the calcium-dependent hydrolysis of the 2-acyl groups in 3-sn-phosphoglycerides. The sequence is that of Basic phospholipase A2 beta-bungarotoxin A1 chain from Bungarus multicinctus (Many-banded krait).